A 444-amino-acid chain; its full sequence is Probable glycine dehydrogenase (decarboxylating) subunit 1 (444 aa).

This sequence belongs to the GcvP family. N-terminal subunit subfamily. As to quaternary structure, the glycine cleavage system is composed of four proteins: P, T, L and H. In this organism, the P 'protein' is a heterodimer of two subunits.

The enzyme catalyses N(6)-[(R)-lipoyl]-L-lysyl-[glycine-cleavage complex H protein] + glycine + H(+) = N(6)-[(R)-S(8)-aminomethyldihydrolipoyl]-L-lysyl-[glycine-cleavage complex H protein] + CO2. In terms of biological role, the glycine cleavage system catalyzes the degradation of glycine. The P protein binds the alpha-amino group of glycine through its pyridoxal phosphate cofactor; CO(2) is released and the remaining methylamine moiety is then transferred to the lipoamide cofactor of the H protein. This chain is Probable glycine dehydrogenase (decarboxylating) subunit 1, found in Carboxydothermus hydrogenoformans (strain ATCC BAA-161 / DSM 6008 / Z-2901).